A 201-amino-acid chain; its full sequence is B-cell CLL/lymphoma 7 protein family member B-B (201 aa).

The interval glutamine 104–serine 201 is disordered.

It belongs to the BCL7 family.

The protein is B-cell CLL/lymphoma 7 protein family member B-B of Danio rerio (Zebrafish).